The primary structure comprises 429 residues: Enolase 1 (429 aa).

Gln163 is a binding site for (2R)-2-phosphoglycerate. The active-site Proton donor is Glu205. Asp242, Glu287, and Asp314 together coordinate Mg(2+). Residues Lys339, Arg368, Ser369, and Lys390 each contribute to the (2R)-2-phosphoglycerate site. Lys339 serves as the catalytic Proton acceptor.

The protein belongs to the enolase family. Requires Mg(2+) as cofactor.

It localises to the cytoplasm. It is found in the secreted. The protein localises to the cell surface. It catalyses the reaction (2R)-2-phosphoglycerate = phosphoenolpyruvate + H2O. It functions in the pathway carbohydrate degradation; glycolysis; pyruvate from D-glyceraldehyde 3-phosphate: step 4/5. In terms of biological role, catalyzes the reversible conversion of 2-phosphoglycerate (2-PG) into phosphoenolpyruvate (PEP). It is essential for the degradation of carbohydrates via glycolysis. The polypeptide is Enolase 1 (Cupriavidus metallidurans (strain ATCC 43123 / DSM 2839 / NBRC 102507 / CH34) (Ralstonia metallidurans)).